The sequence spans 471 residues: Putative multidrug resistance protein MdtD (471 aa).

The Periplasmic segment spans residues 1-11; that stretch reads MTDLPDSTRWQ. Residues 12–32 traverse the membrane as a helical segment; that stretch reads LWIVAFGFFMQSLDTTIVNTA. Residues 33 to 48 are Cytoplasmic-facing; the sequence is LPSMAQSLGESPLHMH. Residues 49–69 traverse the membrane as a helical segment; sequence MVIVSYVLTVAVMLPASGWLA. At 70–76 the chain is on the periplasmic side; that stretch reads DKVGVRN. The helical transmembrane segment at 77-97 threads the bilayer; the sequence is IFFTAIVLFTLGSLFCALSGT. Topologically, residues 98-101 are cytoplasmic; sequence LNEL. The helical transmembrane segment at 102–124 threads the bilayer; the sequence is LLARALQGVGGAMMVPVGRLTVM. The Periplasmic portion of the chain corresponds to 125-137; sequence KIVPREQYMAAMT. The helical transmembrane segment at 138–158 threads the bilayer; the sequence is FVTLPGQVGPLLGPALGGLLV. Topologically, residues 159 to 164 are cytoplasmic; sequence EYASWH. The helical transmembrane segment at 165-185 threads the bilayer; sequence WIFLINIPVGIIGAIATLMLM. Over 186 to 196 the chain is Periplasmic; sequence PNYTMQTRRFD. The helical transmembrane segment at 197–217 threads the bilayer; the sequence is LSGFLLLAVGMAVLTLALDGS. Residues 218-224 are Cytoplasmic-facing; that stretch reads KGTGLSP. The chain crosses the membrane as a helical span at residues 225–245; that stretch reads LTIAGLVAVGVVALVLYLLHA. Over 246–262 the chain is Periplasmic; the sequence is RNNNRALFSLKLFRTRT. Residues 263–283 form a helical membrane-spanning segment; that stretch reads FSLGLAGSFAGRIGSGMLPFM. The Cytoplasmic portion of the chain corresponds to 284–285; sequence TP. Residues 286–306 traverse the membrane as a helical segment; that stretch reads VFLQIGLGFSPFHAGLMMIPM. Over 307–341 the chain is Periplasmic; it reads VLGSMGMKRIVVQVVNCFGYRRVLVATTLGLSLVT. Residues 342–362 form a helical membrane-spanning segment; it reads LLFMTTALLGWYYVLPFVLFL. The Cytoplasmic portion of the chain corresponds to 363-395; it reads QGMVNSTRFSSMNTLTLKDLPDNLASSGNSLLS. Residues 396-416 traverse the membrane as a helical segment; sequence MIMQLSMSIGVTIAGLLLGLF. Topologically, residues 417–430 are periplasmic; that stretch reads GSQHVSVDSGTTQT. A helical transmembrane segment spans residues 431–451; sequence VFMYTWLSMALIIALPAFIFA. The Cytoplasmic portion of the chain corresponds to 452–471; sequence RVPNDTHQNVAISRRKRSAQ.

It belongs to the major facilitator superfamily. TCR/Tet family.

The protein resides in the cell inner membrane. The protein is Putative multidrug resistance protein MdtD of Escherichia coli O139:H28 (strain E24377A / ETEC).